The primary structure comprises 329 residues: MAAKQMEEIQKKLRLLSYPRANAPAQSLLFAGMERYALLEWLFFKLLGDKSPFSQQNLQGDAGVRDEETVRIQYLAEIAKFLGITPTVDIEAIQGHGTYEDRMEMLRNIVDLVEASLFSDNQEWSIDEQVAKDIQLIDAIAERQSLIFSEECKLFPADVQIQSIYPLPDVSELETKLSEQAKILSNLQQKVDDLAAKHAYNPDEEYTEVESQLRARLESFLETARAFNTIYTKEIRPWTHMMEVPQLHGFGPAANRLLEAYNMLLKFLGNLKNLRDSHAALSIGSSGTVAGEPSSVTRIVSDCEAALTVLNRDLGILSASIAREQGERL.

A coiled-coil region spans residues 169-197 (DVSELETKLSEQAKILSNLQQKVDDLAAK).

As to quaternary structure, part of the augmin complex composed of 8 subunits. The complex acts on microtubules and interacts with gamma-tubulin in spindles and the phragmoplast.

The protein localises to the cytoplasm. It localises to the cytoskeleton. It is found in the spindle. The protein resides in the phragmoplast. In terms of biological role, contributes to the assembly of the acentrosomal spindle and phragmoplast microtubule arrays as part of the augmin complex. Regulates the association of gamma-tubulin with the spindle and phragmoplast microtubules. In Arabidopsis thaliana (Mouse-ear cress), this protein is AUGMIN subunit 7.